The primary structure comprises 372 residues: Probable leucine aminopeptidase MCYG_03459 (372 aa).

A signal peptide spans 1-18 (MKISTLAVVSAFAVTAIA). N-linked (GlcNAc...) asparagine glycosylation is present at asparagine 95. Zn(2+) is bound by residues histidine 175 and aspartate 194. Residues asparagine 195 and asparagine 219 are each glycosylated (N-linked (GlcNAc...) asparagine). 2 residues coordinate Zn(2+): glutamate 233 and aspartate 260. Cysteine 305 and cysteine 309 are disulfide-bonded. Histidine 338 serves as a coordination point for Zn(2+).

The protein belongs to the peptidase M28 family. M28E subfamily. As to quaternary structure, monomer. The cofactor is Zn(2+).

Its subcellular location is the secreted. Functionally, probable extracellular aminopeptidase which contributes to pathogenicity. The protein is Probable leucine aminopeptidase MCYG_03459 of Arthroderma otae (strain ATCC MYA-4605 / CBS 113480) (Microsporum canis).